The chain runs to 339 residues: N-acetyl-gamma-glutamyl-phosphate reductase (339 aa).

The active site involves Cys145.

It belongs to the NAGSA dehydrogenase family. Type 1 subfamily.

The protein localises to the cytoplasm. It catalyses the reaction N-acetyl-L-glutamate 5-semialdehyde + phosphate + NADP(+) = N-acetyl-L-glutamyl 5-phosphate + NADPH + H(+). Its pathway is amino-acid biosynthesis; L-arginine biosynthesis; N(2)-acetyl-L-ornithine from L-glutamate: step 3/4. Its function is as follows. Catalyzes the NADPH-dependent reduction of N-acetyl-5-glutamyl phosphate to yield N-acetyl-L-glutamate 5-semialdehyde. This Thermotoga petrophila (strain ATCC BAA-488 / DSM 13995 / JCM 10881 / RKU-1) protein is N-acetyl-gamma-glutamyl-phosphate reductase.